Reading from the N-terminus, the 274-residue chain is Copper chaperone for superoxide dismutase (274 aa).

One can recognise an HMA domain in the interval 11–74 (MCALEFTVQM…LLESTGRQAV (64 aa)). Residues Cys22 and Cys25 each coordinate Cu cation. Lys76 is covalently cross-linked (Glycyl lysine isopeptide (Lys-Gly) (interchain with G-Cter in ubiquitin)). The superoxide dismutase-like stretch occupies residues 88–234 (AAVAIMEGSG…LACGIIARSA (147 aa)). An intrachain disulfide couples Cys141 to Cys227. Positions 147, 155, 164, and 167 each coordinate Zn(2+). Residues Lys189, Lys216, and Lys241 each participate in a glycyl lysine isopeptide (Lys-Gly) (interchain with G-Cter in ubiquitin) cross-link. Positions 244 and 246 each coordinate Cu cation. A Phosphoserine modification is found at Ser267.

The protein in the C-terminal section; belongs to the Cu-Zn superoxide dismutase family. In terms of assembly, homodimer, and heterodimer with SOD1. Interacts with COMMD1. Interacts with XIAP/BIRC4. Interacts with SLC31A1(via C-terminal domain); this interaction is Cu(1+)-mediated. The heterodimer CCS:SOD1 interacts with SLC31A1; this heterotrimer is Cu(1+)-mediated and its maintenance is regulated through SOD1 activation. Cu(2+) is required as a cofactor. It depends on Zn(2+) as a cofactor. Ubiquitinion by XIAP/BIRC4 leads to enhancement of its chaperone activity toward its physiologic target, SOD1, rather than proteasomal degradation. XIAP/BIRC4 preferentially ubiquitinates at Lys-241.

It is found in the cytoplasm. In terms of biological role, delivers copper to copper zinc superoxide dismutase (SOD1). This Rattus norvegicus (Rat) protein is Copper chaperone for superoxide dismutase.